Here is a 400-residue protein sequence, read N- to C-terminus: Nicotinate phosphoribosyltransferase (400 aa).

H220 is subject to Phosphohistidine; by autocatalysis.

This sequence belongs to the NAPRTase family. Transiently phosphorylated on a His residue during the reaction cycle. Phosphorylation strongly increases the affinity for substrates and increases the rate of nicotinate D-ribonucleotide production. Dephosphorylation regenerates the low-affinity form of the enzyme, leading to product release.

The enzyme catalyses nicotinate + 5-phospho-alpha-D-ribose 1-diphosphate + ATP + H2O = nicotinate beta-D-ribonucleotide + ADP + phosphate + diphosphate. Its pathway is cofactor biosynthesis; NAD(+) biosynthesis; nicotinate D-ribonucleotide from nicotinate: step 1/1. In terms of biological role, catalyzes the synthesis of beta-nicotinate D-ribonucleotide from nicotinate and 5-phospho-D-ribose 1-phosphate at the expense of ATP. The sequence is that of Nicotinate phosphoribosyltransferase from Salmonella typhi.